A 324-amino-acid polypeptide reads, in one-letter code: Acetyl-coenzyme A carboxylase carboxyl transferase subunit alpha (324 aa).

Residues 41–291 (RLDRLKEKIY…QEYVLQEWLK (251 aa)) form the CoA carboxyltransferase C-terminal domain.

It belongs to the AccA family. As to quaternary structure, acetyl-CoA carboxylase is a heterohexamer composed of biotin carboxyl carrier protein (AccB), biotin carboxylase (AccC) and two subunits each of ACCase subunit alpha (AccA) and ACCase subunit beta (AccD).

The protein resides in the cytoplasm. The enzyme catalyses N(6)-carboxybiotinyl-L-lysyl-[protein] + acetyl-CoA = N(6)-biotinyl-L-lysyl-[protein] + malonyl-CoA. Its pathway is lipid metabolism; malonyl-CoA biosynthesis; malonyl-CoA from acetyl-CoA: step 1/1. Component of the acetyl coenzyme A carboxylase (ACC) complex. First, biotin carboxylase catalyzes the carboxylation of biotin on its carrier protein (BCCP) and then the CO(2) group is transferred by the carboxyltransferase to acetyl-CoA to form malonyl-CoA. This Chlamydia muridarum (strain MoPn / Nigg) protein is Acetyl-coenzyme A carboxylase carboxyl transferase subunit alpha.